Here is a 262-residue protein sequence, read N- to C-terminus: Acyl-[acyl-carrier-protein]--UDP-N-acetylglucosamine O-acyltransferase (262 aa).

This sequence belongs to the transferase hexapeptide repeat family. LpxA subfamily. Homotrimer.

The protein localises to the cytoplasm. The catalysed reaction is a (3R)-hydroxyacyl-[ACP] + UDP-N-acetyl-alpha-D-glucosamine = a UDP-3-O-[(3R)-3-hydroxyacyl]-N-acetyl-alpha-D-glucosamine + holo-[ACP]. Its pathway is glycolipid biosynthesis; lipid IV(A) biosynthesis; lipid IV(A) from (3R)-3-hydroxytetradecanoyl-[acyl-carrier-protein] and UDP-N-acetyl-alpha-D-glucosamine: step 1/6. In terms of biological role, involved in the biosynthesis of lipid A, a phosphorylated glycolipid that anchors the lipopolysaccharide to the outer membrane of the cell. This Shigella flexneri serotype 5b (strain 8401) protein is Acyl-[acyl-carrier-protein]--UDP-N-acetylglucosamine O-acyltransferase.